Here is a 211-residue protein sequence, read N- to C-terminus: Transcriptional regulatory protein RcsA (211 aa).

Positions 135 to 200 (LDVHPLTLSQ…VIYHVVRLTD (66 aa)) constitute an HTH luxR-type domain. Residues 159–178 (TIQISDKMQIKAKTVSSHKG) constitute a DNA-binding region (H-T-H motif).

Belongs to the RcsA family.

Component of the Rcs signaling system, which controls transcription of numerous genes. Binds to DNA to regulate expression of genes. This chain is Transcriptional regulatory protein RcsA, found in Pantoea stewartii subsp. stewartii (Erwinia stewartii).